Here is a 29-residue protein sequence, read N- to C-terminus: U1-pseudomyrmecitoxin-Pt1 subunit SS2 (29 aa).

The protein belongs to the myrmexin family. As to quaternary structure, heterodimer composed of subunit SS2 and subunit LS1 (U1-PSDTX-Pt1e), and heterodimer composed of subunit SS2 and LS2 (U1-PSDTX-Pt1c); disulfide-linked. Expressed by the venom gland.

It is found in the secreted. This heterodimer may have anti-inflammatory properties, since the myrmexin complex (composed of 6 SS-LS heterodimers) inhibits carrageenin-induced edema in a dose-dependent manner (after subcutaneous injection into rats). The sequence is that of U1-pseudomyrmecitoxin-Pt1 subunit SS2 from Pseudomyrmex triplarinus (Ant).